The chain runs to 409 residues: E3 ubiquitin-protein ligase MARCHF4 (409 aa).

The first 17 residues, 1–17 (MLMPLGGLLWWWCCCCG), serve as a signal peptide directing secretion. A disordered region spans residues 92 to 133 (GPREAVGRETPPLPPPPPLPPSGDDDWDGPATGPPASLLSSA). A compositionally biased stretch (pro residues) spans 102 to 112 (PPLPPPPPLPP). An RING-CH-type zinc finger spans residues 154–214 (DSGMRTPLCR…ELCYYKYHVI (61 aa)). The Zn(2+) site is built by Cys-162, Cys-165, Cys-178, Cys-180, His-188, Cys-191, Cys-204, and Cys-207. 2 helical membrane-spanning segments follow: residues 242-262 (LGSLFLIASISWLIWSTFSPS) and 271-291 (LFQICYGMYGFMDVVCIGLII). Disordered stretches follow at residues 323–372 (EDQK…GPVS) and 389–409 (PHDQRSTQGSGRELVMRVTTV). Over residues 328-343 (GGRTNLQTSSSAQANL) the composition is skewed to polar residues.

It localises to the golgi apparatus membrane. It catalyses the reaction S-ubiquitinyl-[E2 ubiquitin-conjugating enzyme]-L-cysteine + [acceptor protein]-L-lysine = [E2 ubiquitin-conjugating enzyme]-L-cysteine + N(6)-ubiquitinyl-[acceptor protein]-L-lysine.. It participates in protein modification; protein ubiquitination. Functionally, E3 ubiquitin-protein ligase that may mediate ubiquitination of MHC-I and CD4, and promote their subsequent endocytosis and sorting to lysosomes via multivesicular bodies. E3 ubiquitin ligases accept ubiquitin from an E2 ubiquitin-conjugating enzyme in the form of a thioester and then directly transfer the ubiquitin to targeted substrates. This Mus musculus (Mouse) protein is E3 ubiquitin-protein ligase MARCHF4 (Marchf4).